The sequence spans 315 residues: Oxalate oxidoreductase subunit delta (315 aa).

4Fe-4S ferredoxin-type domains are found at residues 252-280 and 281-310; these read QRPIIDREACTECYTCWIYCPDSCITRTE and EGPVFNMKYCKGCGLCTAVCPSGALTNVPE. 8 residues coordinate [4Fe-4S] cluster: Cys-261, Cys-264, Cys-267, Cys-271, Cys-290, Cys-293, Cys-296, and Cys-300.

As to quaternary structure, dimer of heterotrimer of one alpha, one beta and one delta subunit. Requires [4Fe-4S] cluster as cofactor.

The enzyme catalyses oxidized 2[4Fe-4S]-[ferredoxin] + oxalate = reduced 2[4Fe-4S]-[ferredoxin] + 2 CO2. Functionally, catalyzes the anaerobic oxidation of oxalate using a broad range of electron acceptors, including ferredoxin and the nickel-dependent carbon monoxide dehydrogenase. Does not require coenzyme A as cosubstrate. Enables anaerobic growth on oxalate which is used as energy source by the bacteria. The chain is Oxalate oxidoreductase subunit delta from Moorella thermoacetica (strain ATCC 39073 / JCM 9320).